The primary structure comprises 412 residues: MSGKGSVVLAYSGGLDTSCILVWLKEQGYDVIAYLANIGQKEDFEEARKKALKLGAKKVFIEDISKEFVEEFIWPAIQSSALYEDRYLLGTSLARPCIARKQVEIAQREGAKYVSHGATGKGNDQIRFELTCYSLAPQIKVIAPWRMPEFYNRFQGRNDLMEYAKQHGIPVPVTPKNPWSMDENLMHISYEAGILENPKNQAPPGLYTKTQDPAKAPNSPDMLEIEFKKGVPVKVTNVGDGTTHSTALELFLYLNEVAGKHGVGRIDIVENRFIGMKSRGIYETPAGTILYHAHLDIEAFTMDREVRKIKQGLGLKFAELVYTGFWHSPECEFVRHCIAKSQERVEGKVQVSVFKGQVYILGRESPLSLYNEELVSMNVQGDYEPVDATGFININSLRLKEYHRLQNKVTAK.

Residues 10–18 (AYSGGLDTS) and A36 each bind ATP. L-citrulline-binding residues include Y87 and S92. Position 87 is a phosphotyrosine (Y87). K112 carries the N6-acetyllysine modification. Y113 is modified (phosphotyrosine). Position 115-123 (115-123 (SHGATGKGN)) interacts with ATP. Residues T119, N123, and D124 each coordinate L-aspartate. N123 contacts L-citrulline. R127 provides a ligand contact to L-citrulline. Residues K165 and K176 each carry the N6-acetyllysine; by CLOCK modification. 2 residues coordinate L-citrulline: S180 and S189. Residue S180 is modified to Phosphoserine. Position 219 is a phosphoserine (S219). Residues E270 and Y282 each coordinate L-citrulline.

It belongs to the argininosuccinate synthase family. Type 1 subfamily. In terms of assembly, homotetramer. Interacts with NMRAL1. Interacts with CLOCK; in a circadian manner. Forms tissue-specific complexes with ASL, SLC7A1, HSP90AA1 and nitric oxide synthase NOS1, NOS2 or NOS3; the complex regulates cell-autonomous L-arginine synthesis and citrulline recycling while channeling extracellular L-arginine to nitric oxide synthesis pathway. Post-translationally, acetylated by CLOCK in a circadian manner which negatively regulates its enzyme activity. Deacetylated by histone deacetylases.

The protein resides in the cytoplasm. The protein localises to the cytosol. The enzyme catalyses L-citrulline + L-aspartate + ATP = 2-(N(omega)-L-arginino)succinate + AMP + diphosphate + H(+). Its pathway is amino-acid biosynthesis; L-arginine biosynthesis; L-arginine from L-ornithine and carbamoyl phosphate: step 2/3. It participates in nitrogen metabolism; urea cycle; (N(omega)-L-arginino)succinate from L-aspartate and L-citrulline: step 1/1. Its function is as follows. One of the enzymes of the urea cycle, the metabolic pathway transforming neurotoxic amonia produced by protein catabolism into inocuous urea in the liver of ureotelic animals. Catalyzes the formation of arginosuccinate from aspartate, citrulline and ATP and together with ASL it is responsible for the biosynthesis of arginine in most body tissues. The sequence is that of Argininosuccinate synthase from Bos taurus (Bovine).